A 193-amino-acid chain; its full sequence is Dual-action ribosomal maturation protein DarP (193 aa).

It belongs to the DarP family.

The protein localises to the cytoplasm. Its function is as follows. Member of a network of 50S ribosomal subunit biogenesis factors which assembles along the 30S-50S interface, preventing incorrect 23S rRNA structures from forming. Promotes peptidyl transferase center (PTC) maturation. The polypeptide is Dual-action ribosomal maturation protein DarP (Vibrio cholerae serotype O1 (strain ATCC 39315 / El Tor Inaba N16961)).